The following is a 147-amino-acid chain: Small ribosomal subunit protein uS12 (147 aa).

The protein belongs to the universal ribosomal protein uS12 family. Part of the 30S ribosomal subunit.

Functionally, with S4 and S5 plays an important role in translational accuracy. Located at the interface of the 30S and 50S subunits. This chain is Small ribosomal subunit protein uS12, found in Hyperthermus butylicus (strain DSM 5456 / JCM 9403 / PLM1-5).